The primary structure comprises 267 residues: Small ribosomal subunit protein uS2 (267 aa).

The segment at 225–267 is disordered; the sequence is LREQELEGEEQEEAAPATEEEKKELIEEAVAEGEAEETEEEEK. Positions 251–267 are enriched in acidic residues; the sequence is EEAVAEGEAEETEEEEK.

The protein belongs to the universal ribosomal protein uS2 family.

This Nitratiruptor sp. (strain SB155-2) protein is Small ribosomal subunit protein uS2.